Consider the following 336-residue polypeptide: MRLAVIAGDGIGPEVITEALKVLDAVLPGVEKTEYDLGARQYHKTGEVLPDSVLEELKGHDAILLGAIGDPSVPSGLLERGLLLRIRFELDHHINLRPARLYPGVQSPLAGNPEIDFVVVREGTEGPYTGNGGAIRVGTPHEIATEVSVNTAFGVRRAVQDAFGRAQQRRKHLTLVHKNNVLTNAGSLWWRTVQTVAAEYPDVEVAYQHVDAATIHMVTDPGRFDVIVTDNLFGDIITDLAAAVCGGIGLAASGNIDATLTHPSMFEPVHGSAPDIAGQGIADPTAAVMSVSLLLAHMAEVDAAARVDKAVAEHLATRGDEKLSTAAVGERILGKL.

Substrate is bound by residues R87, R97, R121, and D211. The Mg(2+) site is built by D211, D235, and D239. Residue 271 to 283 (GSAPDIAGQGIAD) participates in NAD(+) binding.

The protein belongs to the isocitrate and isopropylmalate dehydrogenases family. LeuB type 2 subfamily. As to quaternary structure, homodimer. The cofactor is Mg(2+). Mn(2+) serves as cofactor.

The protein localises to the cytoplasm. The catalysed reaction is (2R,3S)-3-isopropylmalate + NAD(+) = 4-methyl-2-oxopentanoate + CO2 + NADH. Its pathway is amino-acid biosynthesis; L-leucine biosynthesis; L-leucine from 3-methyl-2-oxobutanoate: step 3/4. Catalyzes the oxidation of 3-carboxy-2-hydroxy-4-methylpentanoate (3-isopropylmalate) to 3-carboxy-4-methyl-2-oxopentanoate. The product decarboxylates to 4-methyl-2 oxopentanoate. The polypeptide is 3-isopropylmalate dehydrogenase (Mycolicibacterium vanbaalenii (strain DSM 7251 / JCM 13017 / BCRC 16820 / KCTC 9966 / NRRL B-24157 / PYR-1) (Mycobacterium vanbaalenii)).